The primary structure comprises 479 residues: Cell division protein FtsA (479 aa).

The segment at 417-458 (QGRQTERKENEQRDNTDRQREDTPKQTVKKKEKTGPSFGDKL) is disordered. Residues 420 to 440 (QTERKENEQRDNTDRQREDTP) show a composition bias toward basic and acidic residues.

The protein belongs to the FtsA/MreB family. Self-interacts. Interacts with FtsZ.

It is found in the cell inner membrane. In terms of biological role, cell division protein that is involved in the assembly of the Z ring. May serve as a membrane anchor for the Z ring. In Porphyromonas gingivalis (strain ATCC BAA-308 / W83), this protein is Cell division protein FtsA.